A 290-amino-acid polypeptide reads, in one-letter code: Putative neuropeptide Y receptor type 6 (290 aa).

Residues 1–39 (MEVSLNHPASNTTSTKNNNSAFFYFESCQPPSPALLLLC) lie on the Extracellular side of the membrane. Residue asparagine 11 is glycosylated (N-linked (GlcNAc...) asparagine). A helical membrane pass occupies residues 40-60 (IAYTVVLIVGLFGNLSLIIII). The Cytoplasmic segment spans residues 61–83 (FKKQRKAQNFTSILIANLSLSDT). A helical membrane pass occupies residues 84-104 (LVCVMCIHFTIIYTLMDHWIF). Over 105–111 (GDTMCRL) the chain is Extracellular. A disulfide bridge connects residues cysteine 109 and cysteine 196. Residues 112–132 (TSYVQSVSISVSIFSLVFTAV) traverse the membrane as a helical segment. The Cytoplasmic portion of the chain corresponds to 133 to 150 (ERYQLIVNPRGWKPSVTH). Residues 151–171 (AYWGITLIWLFSLLLSIPFFL) traverse the membrane as a helical segment. At 172-206 (SYHLTDEPFRNLSLPTDLYTHQVACVENWPSKKDR) the chain is on the extracellular side. A helical transmembrane segment spans residues 207–227 (LLFTTSLFLLQYFVPLGFILI). The Cytoplasmic segment spans residues 228-258 (CYLKIVICLRRRNAKVDKKKENEGRLNENKR). A helical membrane pass occupies residues 259 to 279 (INTMLISIVVTFGACWLPRIS). Residues 280 to 290 (SMSSLTGIMRC) are Extracellular-facing.

Belongs to the G-protein coupled receptor 1 family. Expressed in heart, skeletal muscle, gastrointestinal tissues, spleen, brain and adrenal glands.

It is found in the membrane. Its function is as follows. When expressed, is unable to bind pancreatic polypeptide (PP), neuropeptide Y (NPY), or peptide YY (PYY), suggesting that either it is functionally inactive or that it may have acquired a pancreatic polypeptide-independent function. This Homo sapiens (Human) protein is Putative neuropeptide Y receptor type 6 (NPY6R).